Reading from the N-terminus, the 166-residue chain is MAAEAAATSRFAAACGALSQYVRAADNVHRARTAAAAAAVRPLPLMPGADVAGDEREEEGGGAAASSAAAQMTIFYGGRVLVLDECPADRAAALLRLAASSRGVPRDDLASTAAAAGESADLPVARKASLQRFMEKRKGRLAARGQPYRRHDAAAAARGDHLALAL.

A Tify domain is found at 65-100 (ASSAAAQMTIFYGGRVLVLDECPADRAAALLRLAAS). A Jas motif is present at residues 123 to 148 (PVARKASLQRFMEKRKGRLAARGQPY). A Nuclear localization signal motif is present at residues 125–132 (ARKASLQR).

Belongs to the TIFY/JAZ family. Post-translationally, ubiquitinated. Targeted for degradation by the SCF(COI1) E3 ubiquitin ligase-proteasome pathway during jasmonate signaling.

The protein localises to the nucleus. Functionally, repressor of jasmonate responses. This Oryza sativa subsp. japonica (Rice) protein is Protein TIFY 11e.